A 283-amino-acid polypeptide reads, in one-letter code: 4-diphosphocytidyl-2-C-methyl-D-erythritol kinase (283 aa).

K8 is an active-site residue. 90 to 100 (PIGSGLAGGSS) provides a ligand contact to ATP. Residue D132 is part of the active site.

The protein belongs to the GHMP kinase family. IspE subfamily.

It carries out the reaction 4-CDP-2-C-methyl-D-erythritol + ATP = 4-CDP-2-C-methyl-D-erythritol 2-phosphate + ADP + H(+). Its pathway is isoprenoid biosynthesis; isopentenyl diphosphate biosynthesis via DXP pathway; isopentenyl diphosphate from 1-deoxy-D-xylulose 5-phosphate: step 3/6. Catalyzes the phosphorylation of the position 2 hydroxy group of 4-diphosphocytidyl-2C-methyl-D-erythritol. The protein is 4-diphosphocytidyl-2-C-methyl-D-erythritol kinase of Chlamydia muridarum (strain MoPn / Nigg).